The sequence spans 273 residues: Dermonecrotic toxin LdSicTox-alphaIB1avi (273 aa).

H5 is an active-site residue. The Mg(2+) site is built by E25 and D27. H41 acts as the Nucleophile in catalysis. Disulfide bonds link C45/C51 and C47/C190. D85 is a Mg(2+) binding site. N-linked (GlcNAc...) asparagine glycosylation is present at N250.

The protein belongs to the arthropod phospholipase D family. Class II subfamily. Mg(2+) is required as a cofactor. In terms of tissue distribution, expressed by the venom gland.

It is found in the secreted. It catalyses the reaction an N-(acyl)-sphingosylphosphocholine = an N-(acyl)-sphingosyl-1,3-cyclic phosphate + choline. The catalysed reaction is an N-(acyl)-sphingosylphosphoethanolamine = an N-(acyl)-sphingosyl-1,3-cyclic phosphate + ethanolamine. The enzyme catalyses a 1-acyl-sn-glycero-3-phosphocholine = a 1-acyl-sn-glycero-2,3-cyclic phosphate + choline. It carries out the reaction a 1-acyl-sn-glycero-3-phosphoethanolamine = a 1-acyl-sn-glycero-2,3-cyclic phosphate + ethanolamine. Dermonecrotic toxins cleave the phosphodiester linkage between the phosphate and headgroup of certain phospholipids (sphingolipid and lysolipid substrates), forming an alcohol (often choline) and a cyclic phosphate. This toxin acts on sphingomyelin (SM). It may also act on ceramide phosphoethanolamine (CPE), lysophosphatidylcholine (LPC) and lysophosphatidylethanolamine (LPE), but not on lysophosphatidylserine (LPS), and lysophosphatidylglycerol (LPG). It acts by transphosphatidylation, releasing exclusively cyclic phosphate products as second products. Induces dermonecrosis, hemolysis, increased vascular permeability, edema, inflammatory response, and platelet aggregation. This Loxosceles deserta (Desert recluse spider) protein is Dermonecrotic toxin LdSicTox-alphaIB1avi.